Here is a 144-residue protein sequence, read N- to C-terminus: 3-dehydroquinate dehydratase (144 aa).

Residue tyrosine 24 is the Proton acceptor of the active site. The substrate site is built by asparagine 73, histidine 79, and aspartate 86. Histidine 99 acts as the Proton donor in catalysis. Residues 100 to 101 (LS) and arginine 110 contribute to the substrate site.

It belongs to the type-II 3-dehydroquinase family. In terms of assembly, homododecamer.

The catalysed reaction is 3-dehydroquinate = 3-dehydroshikimate + H2O. The protein operates within metabolic intermediate biosynthesis; chorismate biosynthesis; chorismate from D-erythrose 4-phosphate and phosphoenolpyruvate: step 3/7. In terms of biological role, catalyzes a trans-dehydration via an enolate intermediate. This Shewanella sp. (strain MR-4) protein is 3-dehydroquinate dehydratase.